The primary structure comprises 510 residues: Probable mannosyl-oligosaccharide alpha-1,2-mannosidase 1B (510 aa).

Positions 1–21 are cleaved as a signal peptide; the sequence is MHFSSLSLPLTALSLVTPSLA. Residues asparagine 35, asparagine 95, asparagine 182, and asparagine 249 are each glycosylated (N-linked (GlcNAc...) asparagine). Cysteine 332 and cysteine 361 form a disulfide bridge. N-linked (GlcNAc...) asparagine glycosylation occurs at asparagine 366. Glutamate 375 acts as the Proton donor in catalysis. Threonine 501 contributes to the Ca(2+) binding site.

It belongs to the glycosyl hydrolase 47 family. As to quaternary structure, monomer. The cofactor is Ca(2+). Mg(2+) is required as a cofactor.

Its subcellular location is the cytoplasmic vesicle lumen. The catalysed reaction is N(4)-(alpha-D-Man-(1-&gt;2)-alpha-D-Man-(1-&gt;2)-alpha-D-Man-(1-&gt;3)-[alpha-D-Man-(1-&gt;2)-alpha-D-Man-(1-&gt;3)-[alpha-D-Man-(1-&gt;2)-alpha-D-Man-(1-&gt;6)]-alpha-D-Man-(1-&gt;6)]-beta-D-Man-(1-&gt;4)-beta-D-GlcNAc-(1-&gt;4)-beta-D-GlcNAc)-L-asparaginyl-[protein] (N-glucan mannose isomer 9A1,2,3B1,2,3) + 4 H2O = N(4)-(alpha-D-Man-(1-&gt;3)-[alpha-D-Man-(1-&gt;3)-[alpha-D-Man-(1-&gt;6)]-alpha-D-Man-(1-&gt;6)]-beta-D-Man-(1-&gt;4)-beta-D-GlcNAc-(1-&gt;4)-beta-D-GlcNAc)-L-asparaginyl-[protein] (N-glucan mannose isomer 5A1,2) + 4 beta-D-mannose. It catalyses the reaction N(4)-(alpha-D-Man-(1-&gt;2)-alpha-D-Man-(1-&gt;2)-alpha-D-Man-(1-&gt;3)-[alpha-D-Man-(1-&gt;3)-[alpha-D-Man-(1-&gt;2)-alpha-D-Man-(1-&gt;6)]-alpha-D-Man-(1-&gt;6)]-beta-D-Man-(1-&gt;4)-beta-D-GlcNAc-(1-&gt;4)-beta-D-GlcNAc)-L-asparaginyl-[protein] (N-glucan mannose isomer 8A1,2,3B1,3) + 3 H2O = N(4)-(alpha-D-Man-(1-&gt;3)-[alpha-D-Man-(1-&gt;3)-[alpha-D-Man-(1-&gt;6)]-alpha-D-Man-(1-&gt;6)]-beta-D-Man-(1-&gt;4)-beta-D-GlcNAc-(1-&gt;4)-beta-D-GlcNAc)-L-asparaginyl-[protein] (N-glucan mannose isomer 5A1,2) + 3 beta-D-mannose. It functions in the pathway protein modification; protein glycosylation. Its function is as follows. Involved in the maturation of Asn-linked oligosaccharides. Progressively trims alpha-1,2-linked mannose residues from Man(9)GlcNAc(2) to produce Man(5)GlcNAc(2). In Aspergillus flavus (strain ATCC 200026 / FGSC A1120 / IAM 13836 / NRRL 3357 / JCM 12722 / SRRC 167), this protein is Probable mannosyl-oligosaccharide alpha-1,2-mannosidase 1B (mns1B).